The primary structure comprises 53 residues: Light-harvesting protein B800/850/890 beta-1 chain (53 aa).

Residues 1–19 lie on the Cytoplasmic side of the membrane; sequence ADNMSLTGLSDEEAKEFHS. Residues His18 and His36 each coordinate a bacteriochlorophyll. A helical transmembrane segment spans residues 20–42; it reads IFMQSFLIFTAVAVVAHFLAWAW. The Periplasmic segment spans residues 43 to 53; it reads RPWIPGAEGYG.

It belongs to the antenna complex beta subunit family. The core complex is formed by different alpha and beta chains, binding bacteriochlorophyll molecules, and arranged most probably in tetrameric structures disposed around the reaction center. The non-pigmented gamma chains may constitute additional components.

The protein resides in the cell inner membrane. Functionally, antenna complexes are light-harvesting systems, which transfer the excitation energy to the reaction centers. The sequence is that of Light-harvesting protein B800/850/890 beta-1 chain from Halorhodospira halophila (strain DSM 244 / SL1) (Ectothiorhodospira halophila (strain DSM 244 / SL1)).